The sequence spans 1377 residues: Dicer-like protein 2 (1377 aa).

A Helicase ATP-binding domain is found at 23–203 (MFEASLQENI…LSMIESNMNA (181 aa)). An ATP-binding site is contributed by 36 to 43 (MDTGSGKT). A DEAH box motif is present at residues 144 to 147 (DEAH). The 178-residue stretch at 367–544 (KLEALISFLS…ALALETMAEV (178 aa)) folds into the Helicase C-terminal domain. Residues 563 to 657 (AVARLHHFCS…LPLTRKPELR (95 aa)) form the Dicer dsRNA-binding fold domain. RNase III domains are found at residues 916-1056 (ATRL…MDGG) and 1090-1274 (NDSL…VDSR). Mg(2+) contacts are provided by Glu1129, Asp1260, and Glu1263.

This sequence belongs to the helicase family. Dicer subfamily. It depends on Mg(2+) as a cofactor. Mn(2+) is required as a cofactor.

In terms of biological role, dicer-like endonuclease involved in cleaving double-stranded RNA in the RNA interference (RNAi) pathway. Produces 21 to 25 bp dsRNAs (siRNAs) which target the selective destruction of homologous RNAs leading to sequence-specific suppression of gene expression, called post-transcriptional gene silencing (PTGS). Part of a broad host defense response against viral infection and transposons. The chain is Dicer-like protein 2 (dcl2) from Aspergillus terreus (strain NIH 2624 / FGSC A1156).